We begin with the raw amino-acid sequence, 180 residues long: NADH-quinone oxidoreductase subunit I (180 aa).

2 4Fe-4S ferredoxin-type domains span residues 48–80 (IVLTRDPDGDERCVACNLCAVACPVGCISLQKS) and 90–119 (EFFRINFSRCIFCGLCEEACPTTAIQLTPD). [4Fe-4S] cluster is bound by residues cysteine 60, cysteine 63, cysteine 66, cysteine 70, cysteine 99, cysteine 102, cysteine 105, and cysteine 109. The segment covering 161-174 (KPKGDAENEAKPID) has biased composition (basic and acidic residues). A disordered region spans residues 161–180 (KPKGDAENEAKPIDVKSLLP).

Belongs to the complex I 23 kDa subunit family. As to quaternary structure, NDH-1 is composed of 13 different subunits. Subunits NuoA, H, J, K, L, M, N constitute the membrane sector of the complex. Requires [4Fe-4S] cluster as cofactor.

Its subcellular location is the cell inner membrane. The catalysed reaction is a quinone + NADH + 5 H(+)(in) = a quinol + NAD(+) + 4 H(+)(out). Functionally, NDH-1 shuttles electrons from NADH, via FMN and iron-sulfur (Fe-S) centers, to quinones in the respiratory chain. The immediate electron acceptor for the enzyme in this species is believed to be ubiquinone. Couples the redox reaction to proton translocation (for every two electrons transferred, four hydrogen ions are translocated across the cytoplasmic membrane), and thus conserves the redox energy in a proton gradient. The polypeptide is NADH-quinone oxidoreductase subunit I (Shewanella oneidensis (strain ATCC 700550 / JCM 31522 / CIP 106686 / LMG 19005 / NCIMB 14063 / MR-1)).